The primary structure comprises 452 residues: Tripartite motif-containing protein 51G (452 aa).

Residues 15-56 (CPICMNYFIDPVTIDCGHSFCRPCFYLNWQDMAVLAQCSKCK) form an RING-type zinc finger. The B box-type zinc finger occupies 88 to 129 (SEEQICGTHRETKEMFCEVDKSLLCLLCSNSQEHRNHRHCPT). The Zn(2+) site is built by C93, H96, C115, and H121. The B30.2/SPRY domain maps to 269 to 452 (EFSAGPIIGL…LWPIICCSHF (184 aa)).

It belongs to the TRIM/RBCC family.

In Homo sapiens (Human), this protein is Tripartite motif-containing protein 51G.